Consider the following 626-residue polypeptide: DNA primase (626 aa).

The CHC2-type zinc finger occupies 39–63 (CPFHGEKTPSFSVSPEKQIFHCFGC). The Toprim domain maps to 264–346 (EEITLMEGFM…DVFVLQLPAG (83 aa)). Positions 270, 314, and 316 each coordinate Mg(2+).

This sequence belongs to the DnaG primase family. In terms of assembly, monomer. Interacts with DnaB. The cofactor is Zn(2+). Requires Mg(2+) as cofactor.

It carries out the reaction ssDNA + n NTP = ssDNA/pppN(pN)n-1 hybrid + (n-1) diphosphate.. RNA polymerase that catalyzes the synthesis of short RNA molecules used as primers for DNA polymerase during DNA replication. The sequence is that of DNA primase from Listeria monocytogenes serovar 1/2a (strain ATCC BAA-679 / EGD-e).